Here is a 321-residue protein sequence, read N- to C-terminus: WD repeat-containing protein VIP3 (321 aa).

7 WD repeats span residues 12 to 55 (AHED…LVRT), 58 to 97 (GHSL…TIAV), 100 to 140 (APPS…LIST), 156 to 195 (SSKK…LLHQ), 198 to 238 (GHNM…LLGS), 241 to 280 (GHTS…AIQT), and 283 to 319 (NHND…SLYD).

In terms of assembly, component of the nuclear PAF1 complex (PAF1C), which consists of VIP2/ELF7/PAF1, VIP3/SKI8/WDR61, VIP4/LEO1, VIP5/RTF1, VIP6/ELF8/CTR9 and CDC73. Component of the cytoplasmic SKI complex, which consists of SKI2, SKI3 and VIP3/SKI8. Interacts with VIP4 and VIP6.

Its subcellular location is the nucleus. The protein resides in the cytoplasm. Its function is as follows. Component of the PAF1 complex (PAF1C) which is involved in histone modifications such as methylation on histone H3 'Lys-4' (H3K4me3). Involved in regulation of flowering time. Required for the expression of the flowering repressor and MADS box gene FLC. Required for histone H3 trimethylation on 'Lys-4' (H3K4me3) and histone dimethylation on 'Lys-36' (H3K36me2) at the FLC locus. Prevents trimethylation on 'Lys-27' (H3K27me3) at the same locus. Not required for meiotic recombination or progression. Component of the SKI complex which is thought to be involved in exosome-mediated RNA decay and associates with transcriptionally active genes in a manner dependent on PAF1 complex (PAF1C). Required for proper progression of cell differentiation process. This Arabidopsis thaliana (Mouse-ear cress) protein is WD repeat-containing protein VIP3.